A 553-amino-acid polypeptide reads, in one-letter code: MRVLSTTLLIGAAAAAVSPPQQVLQAPEEAVENTHKSSPSLAESLSQPLRELKEELKLLTNEVEEVWEEVSNIFPGALDNIFFSSAKKHTRRPDSHWDHIIRGSDVQNIWVENENGEKEREVGGRLEAFDLRVKAVDPSSLGIDPDVKQYSGYLDDNENDKHLFYWFFESRNDPKTDPVVLWLNGGPGCSSLTGLFFELGPSSIGKNIKPIYNPYSWNSNTSVIFLDQPVNVGFSYSGNSVSETSAAAKDVYALLTLFFKQFPEYSSQDFHIAGESYAGHYIPSFASEILSHKKRNINLKSVLIGNGLTDGLTQYEYYRPMACGDGGYPAVLDETTCRSMDNALGRCQSMIQSCYDSESAWTCVPASIYCNNALLGPYQRTGQNVYDVRKPCEDSSLCYADLEYVSTYLNQAEVMKALGAEVDSFDSCNFDINRNFLFKGDWMKPFHKLVPGLLEEIPVLIYAGDADFICNWLGNKAWTDALEWAGHEEYAATELEDLEIVDNKHKGKKIGQVKSSGNLTFMRLFGGGHMVPYDQPEASLEFFNRWIGGEWTK.

Positions 1–17 are cleaved as a signal peptide; sequence MRVLSTTLLIGAAAAAV. Positions 18–134 are excised as a propeptide; that stretch reads SPPQQVLQAP…RLEAFDLRVK (117 aa). Intrachain disulfides connect cysteine 189–cysteine 428, cysteine 323–cysteine 337, cysteine 347–cysteine 370, cysteine 354–cysteine 363, and cysteine 392–cysteine 398. N-linked (GlcNAc...) asparagine glycosylation is present at asparagine 220. Residue serine 276 is part of the active site. Residue aspartate 467 is part of the active site. A glycan (N-linked (GlcNAc...) asparagine) is linked at asparagine 518. Histidine 529 is an active-site residue.

Belongs to the peptidase S10 family.

The protein resides in the vacuole. It carries out the reaction Release of a C-terminal amino acid with broad specificity.. Vacuolar carboxypeptidase involved in degradation of small peptides. Digests preferentially peptides containing an aliphatic or hydrophobic residue in P1' position, as well as methionine, leucine or phenylalanine in P1 position of ester substrate. This chain is Carboxypeptidase Y homolog A (cpyA), found in Talaromyces stipitatus (strain ATCC 10500 / CBS 375.48 / QM 6759 / NRRL 1006) (Penicillium stipitatum).